Reading from the N-terminus, the 1026-residue chain is Multidrug resistance protein MdtC (1026 aa).

Helical transmembrane passes span 15–35, 333–353, 360–380, 387–407, 431–451, 463–483, 528–548, 853–873, 897–917, 953–973, and 984–1004; these read ILIA…LPVA, EVEE…FLFL, LIPA…MYLC, LSLM…IVVL, VGFT…PLLL, FAVT…TLTP, LVGV…IAIP, LILI…LYES, LFNA…IGIV, PIMM…LSGG, and ITIV…TPVV.

The protein belongs to the resistance-nodulation-cell division (RND) (TC 2.A.6) family. MdtC subfamily. In terms of assembly, part of a tripartite efflux system composed of MdtA, MdtB and MdtC. MdtC forms a heteromultimer with MdtB.

The protein resides in the cell inner membrane. The polypeptide is Multidrug resistance protein MdtC (Salmonella dublin (strain CT_02021853)).